A 389-amino-acid chain; its full sequence is GTPase Obg (389 aa).

The Obg domain maps to 1-159 (MKFVDEAVIK…RELRLELLLL (159 aa)). Positions 160-333 (ADVGMLGLPN…LCYKLADFME (174 aa)) constitute an OBG-type G domain. Residues 166 to 173 (GLPNAGKS), 191 to 195 (FTTLI), 213 to 216 (DIPG), 283 to 286 (NKVD), and 314 to 316 (SAV) each bind GTP. Mg(2+) is bound by residues Ser173 and Thr193. Residues 359–389 (NQGEVITEDDDDDWDDWDDEEDDGHVIYVRE) form a disordered region. Acidic residues predominate over residues 364–381 (ITEDDDDDWDDWDDEEDD).

This sequence belongs to the TRAFAC class OBG-HflX-like GTPase superfamily. OBG GTPase family. In terms of assembly, monomer. The cofactor is Mg(2+).

The protein resides in the cytoplasm. Its function is as follows. An essential GTPase which binds GTP, GDP and possibly (p)ppGpp with moderate affinity, with high nucleotide exchange rates and a fairly low GTP hydrolysis rate. Plays a role in control of the cell cycle, stress response, ribosome biogenesis and in those bacteria that undergo differentiation, in morphogenesis control. This is GTPase Obg from Vibrio vulnificus (strain CMCP6).